The primary structure comprises 73 residues: Large ribosomal subunit protein bL28 (73 aa).

The protein belongs to the bacterial ribosomal protein bL28 family.

This Buchnera aphidicola subsp. Cinara cedri (strain Cc) protein is Large ribosomal subunit protein bL28.